We begin with the raw amino-acid sequence, 293 residues long: Pseudouridine-5'-phosphate glycosidase (293 aa).

Glu21 functions as the Proton donor in the catalytic mechanism. 2 residues coordinate substrate: Lys81 and Val101. Asp130 serves as a coordination point for Mn(2+). A substrate-binding site is contributed by Ser132–Asp134. Lys151 acts as the Nucleophile in catalysis.

This sequence belongs to the pseudouridine-5'-phosphate glycosidase family. As to quaternary structure, homotrimer. Mn(2+) serves as cofactor.

It catalyses the reaction D-ribose 5-phosphate + uracil = psi-UMP + H2O. Functionally, catalyzes the reversible cleavage of pseudouridine 5'-phosphate (PsiMP) to ribose 5-phosphate and uracil. Functions biologically in the cleavage direction, as part of a pseudouridine degradation pathway. In Thermosipho africanus (strain TCF52B), this protein is Pseudouridine-5'-phosphate glycosidase.